A 510-amino-acid polypeptide reads, in one-letter code: Glycerol kinase (510 aa).

Thr-13 contacts ADP. ATP contacts are provided by Thr-13 and Thr-14. Thr-13 serves as a coordination point for sn-glycerol 3-phosphate. Arg-17 serves as a coordination point for ADP. The sn-glycerol 3-phosphate site is built by Arg-83, Glu-84, Tyr-135, and Asp-255. 5 residues coordinate glycerol: Arg-83, Glu-84, Tyr-135, Asp-255, and Gln-256. Thr-277, Gly-321, Gly-421, and Asn-425 together coordinate ADP. ATP contacts are provided by Thr-277, Gly-321, and Gly-421.

It belongs to the FGGY kinase family.

The catalysed reaction is glycerol + ATP = sn-glycerol 3-phosphate + ADP + H(+). It participates in polyol metabolism; glycerol degradation via glycerol kinase pathway; sn-glycerol 3-phosphate from glycerol: step 1/1. In terms of biological role, key enzyme in the regulation of glycerol uptake and metabolism. Catalyzes the phosphorylation of glycerol to yield sn-glycerol 3-phosphate. The sequence is that of Glycerol kinase from Haloquadratum walsbyi (strain DSM 16790 / HBSQ001).